A 231-amino-acid polypeptide reads, in one-letter code: NADH-ubiquinone oxidoreductase chain 4 (231 aa).

The next 7 helical transmembrane spans lie at 1–21 (PIAG…YGII), 34–54 (LFIP…LTCL), 61–80 (SLIA…AVII), 84–106 (WGLS…LFCL), 118–138 (ILIL…WWLL), 156–176 (LLIV…LGLS), and 211–231 (LLMI…ELVI).

It belongs to the complex I subunit 4 family.

It localises to the mitochondrion membrane. It carries out the reaction a ubiquinone + NADH + 5 H(+)(in) = a ubiquinol + NAD(+) + 4 H(+)(out). In terms of biological role, core subunit of the mitochondrial membrane respiratory chain NADH dehydrogenase (Complex I) that is believed to belong to the minimal assembly required for catalysis. Complex I functions in the transfer of electrons from NADH to the respiratory chain. The immediate electron acceptor for the enzyme is believed to be ubiquinone. The polypeptide is NADH-ubiquinone oxidoreductase chain 4 (MT-ND4) (Hypnale hypnale (Merrem's hump-nosed viper)).